The primary structure comprises 130 residues: ATP synthase epsilon chain (130 aa).

This sequence belongs to the ATPase epsilon chain family. F-type ATPases have 2 components, CF(1) - the catalytic core - and CF(0) - the membrane proton channel. CF(1) has five subunits: alpha(3), beta(3), gamma(1), delta(1), epsilon(1). CF(0) has three main subunits: a, b and c.

Its subcellular location is the cell inner membrane. Functionally, produces ATP from ADP in the presence of a proton gradient across the membrane. In Sulfurimonas denitrificans (strain ATCC 33889 / DSM 1251) (Thiomicrospira denitrificans (strain ATCC 33889 / DSM 1251)), this protein is ATP synthase epsilon chain.